We begin with the raw amino-acid sequence, 229 residues long: uncharacterized protein (229 aa).

The first 17 residues, Met-1–Ala-17, serve as a signal peptide directing secretion.

This is an uncharacterized protein from Escherichia coli O157:H7.